A 348-amino-acid polypeptide reads, in one-letter code: Large ribosomal subunit protein uL3m (348 aa).

The transit peptide at 1–40 (MPGWRLLAWAGARVLDRGTGGLGTALGSGNRTDICVLVRS) directs the protein to the mitochondrion.

This sequence belongs to the universal ribosomal protein uL3 family. Component of the mitochondrial ribosome large subunit (39S) which comprises a 16S rRNA and about 50 distinct proteins.

Its subcellular location is the mitochondrion. The polypeptide is Large ribosomal subunit protein uL3m (MRPL3) (Bos taurus (Bovine)).